The primary structure comprises 360 residues: Protein RecA (360 aa).

ATP is bound at residue 64–71 (GHESSGKT). Residues 333–360 (QEQVQPEPKSKQSKSKQASEQATQDELI) form a disordered region.

This sequence belongs to the RecA family.

It is found in the cytoplasm. Can catalyze the hydrolysis of ATP in the presence of single-stranded DNA, the ATP-dependent uptake of single-stranded DNA by duplex DNA, and the ATP-dependent hybridization of homologous single-stranded DNAs. It interacts with LexA causing its activation and leading to its autocatalytic cleavage. The chain is Protein RecA from Francisella philomiragia subsp. philomiragia (strain ATCC 25017 / CCUG 19701 / FSC 153 / O#319-036).